The primary structure comprises 132 residues: Mini-ribonuclease 3 (132 aa).

The active site involves aspartate 17.

The protein belongs to the MrnC RNase family. Homodimer. It depends on Mg(2+) as a cofactor.

The protein resides in the cytoplasm. Functionally, involved in correct processing of both the 5' and 3' ends of 23S rRNA precursor. Processes 30S rRNA precursor transcript even in absence of ribonuclease 3 (Rnc); Rnc processes 30S rRNA into smaller rRNA precursors. The chain is Mini-ribonuclease 3 from Enterococcus faecalis (strain ATCC 700802 / V583).